We begin with the raw amino-acid sequence, 684 residues long: Pre-mRNA-splicing factor CLF1 (684 aa).

HAT repeat units follow at residues 43–75, 77–109, 111–143, 145–176, 178–209, 211–251, 253–285, 295–327, 332–364, 374–410, 412–443, 445–477, 518–550, and 584–622; these read DWQR…FEFD, KDIR…SEIK, KNIN…LEES, GNQG…FETR, LNFE…FEQT, GDIS…WEAS, GEYE…FEKK, IVIA…LVEE, QLTS…ICVR, NDLP…FEIR, NNLL…LEIR, KEFD…LEEN, AEYE…FEST, and ENKH…YEKV.

Belongs to the crooked-neck family. In terms of assembly, associated with the spliceosome.

The protein localises to the nucleus. Its function is as follows. Involved in pre-mRNA splicing and cell cycle progression. Required for the spliceosome assembly and initiation of the DNA replication. This is Pre-mRNA-splicing factor CLF1 (CLF1) from Kluyveromyces lactis (strain ATCC 8585 / CBS 2359 / DSM 70799 / NBRC 1267 / NRRL Y-1140 / WM37) (Yeast).